We begin with the raw amino-acid sequence, 1179 residues long: MIWCLRLTILSLILSQGADGRRKPEVVSVVGRAGESAVLGCDLLPPAGRPPLHVIEWLRFGFLLPIFIQFGLYSPRIDPDYVGRVRLQTGASLQIEGLRVEDQGWYECRVLFLDQHSPEQDFANGSWVHLTVNSPPQFQETPPLVLEVKELEAVTLRCVALGSPQPYVTWKFRGQDLGKGQGQVQVRNGTLWIRRVERGSAGDYTCQASSTEGSVTHTTQLLVLGPPVIVVPPNNNTVNASQDVSLACRAEAYPANLTYSWFQDRINVFHISRLQSRVRILVDGSLWLQATQPDDAGHYTCVPSNGFPHPPSASAYLTVLYPAQVTVMPPETPLPIGMRGVIRCPVRANPPLLFVTWTKDGQALQLDKFPGWSLGPEGSLVIALGNEDALGEYSCTPYNSLGTAGSSPVTRVLLKAPPAFIDQPKEEYFQEVGRDLLIPCSARGDPPPIVSWAKVGRGLQGQAQVDSNNSLILRPLTKEAHGRWECSARNAVAHVTISTNVYVLGTSPHVVTNVSVVPLPKGANVSWEPGFDGGYLQRFSVWYTPLAKRPDRAHHDWVSLAVPMGATHLLVPGLQAYTQYQFSVLAQNKLGSGPFSEIVLSIPEGLPTTPAVPRLPPTEMPPPLSPPRGLVAVRTPRGVLLHWDPPELIPERLDGYILEGRQGSQGWEILDQGVAGTEIQLLVPGLIKDVLYEFRLVAFADSYVSDPSNIANISTSGLEVYPSRTQLPGLLPQPVLAGVVGGVCFLGVAVLVSILAACLMNRRRAARRHRKRLRQDPPLIFSPRGRSGPHSAPGSDSPDSVTKFKLQGSPVPSLRQSLLWGEPARPPSPHPDSPLGRGPLPLEPICRGPDGRFVMGPTVAPPQEKLCLERSEPRTSAKRLAQSLDCSSSSPSGVPQPLCITDISPVGQPPAAMPSPLPGPGPLLQYLSLPFFREMNVDGDWPPLEEPTPASPPDFMGSHPCPTSSFLPPPDSPPTNLRAVLPGTLMGVGVSSEPPYTALADWTLRERVLPGLLSAAPRGSLTSQSSGRGSASFLRPPSTAPSAGGSYLSPAPGDTSSWASGPERWPRREHVVTVSKRRNTSVDENYEWDSEFPGDMELLETWHPGLASSRAHPELEPELGVKTPEKSCLLNTTHAPGPEARCAALREEFLAFRRRRDATRARLPVCQQSISYPEQATLL.

A signal peptide spans M1–G20. Residues R21–P734 are Extracellular-facing. 5 consecutive Ig-like domains span residues P24–N124, P136–T216, P226–T318, P322–T410, and P418–S498. Intrachain disulfides connect C41/C108, C158/C206, C248/C301, C344/C395, and C440/C486. N188 is a glycosylation site (N-linked (GlcNAc...) asparagine). Fibronectin type-III domains follow at residues S507–A611 and P623–L718. N-linked (GlcNAc...) asparagine glycosylation is found at N513 and N524. Residues V735–L755 form a helical membrane-spanning segment. Residues A756–L1179 lie on the Cytoplasmic side of the membrane. Residues A766–Q807 form a disordered region. S809 is subject to Phosphoserine. Disordered stretches follow at residues L819–C846, E869–P895, P942–A979, and A1016–N1079. A compositionally biased stretch (polar residues) spans L884–G893. Residues S1020–G1029 show a composition bias toward polar residues. The short motif at T1177 to L1179 is the PDZ-binding element.

The protein belongs to the immunoglobulin superfamily. Turtle family. As to quaternary structure, interacts with SHANK1 and probably with MAGI2. Expressed in hippocampal neurons (at protein level).

Its subcellular location is the cell membrane. It is found in the synapse. Functionally, functions in dendrite outgrowth and synapse maturation. This Rattus norvegicus (Rat) protein is Protein turtle homolog A (Igsf9).